The following is a 578-amino-acid chain: Proline--tRNA ligase (578 aa).

Belongs to the class-II aminoacyl-tRNA synthetase family. ProS type 1 subfamily. As to quaternary structure, homodimer.

The protein resides in the cytoplasm. It catalyses the reaction tRNA(Pro) + L-proline + ATP = L-prolyl-tRNA(Pro) + AMP + diphosphate. In terms of biological role, catalyzes the attachment of proline to tRNA(Pro) in a two-step reaction: proline is first activated by ATP to form Pro-AMP and then transferred to the acceptor end of tRNA(Pro). As ProRS can inadvertently accommodate and process non-cognate amino acids such as alanine and cysteine, to avoid such errors it has two additional distinct editing activities against alanine. One activity is designated as 'pretransfer' editing and involves the tRNA(Pro)-independent hydrolysis of activated Ala-AMP. The other activity is designated 'posttransfer' editing and involves deacylation of mischarged Ala-tRNA(Pro). The misacylated Cys-tRNA(Pro) is not edited by ProRS. This chain is Proline--tRNA ligase, found in Burkholderia orbicola (strain AU 1054).